The following is a 279-amino-acid chain: 3-methyl-2-oxobutanoate hydroxymethyltransferase 2 (279 aa).

Residues Asp58 and Asp97 each coordinate Mg(2+). Residues Asp58–Ser59, Asp97, and Lys126 each bind 3-methyl-2-oxobutanoate. Glu128 contributes to the Mg(2+) binding site. The active-site Proton acceptor is the Glu195.

It belongs to the PanB family. Homodecamer; pentamer of dimers. Mg(2+) is required as a cofactor.

The protein localises to the cytoplasm. The enzyme catalyses 3-methyl-2-oxobutanoate + (6R)-5,10-methylene-5,6,7,8-tetrahydrofolate + H2O = 2-dehydropantoate + (6S)-5,6,7,8-tetrahydrofolate. The protein operates within cofactor biosynthesis; (R)-pantothenate biosynthesis; (R)-pantoate from 3-methyl-2-oxobutanoate: step 1/2. Its function is as follows. Catalyzes the reversible reaction in which hydroxymethyl group from 5,10-methylenetetrahydrofolate is transferred onto alpha-ketoisovalerate to form ketopantoate. The protein is 3-methyl-2-oxobutanoate hydroxymethyltransferase 2 of Methylibium petroleiphilum (strain ATCC BAA-1232 / LMG 22953 / PM1).